The following is a 923-amino-acid chain: Protocadherin gamma-B4 (923 aa).

A signal peptide spans 1-30; sequence MGSGAGELGRAERLPVLFLFLLSLFCPALC. Cadherin domains lie at 31-133, 134-242, 243-345, 346-450, 451-560, and 568-673; these read EQIR…TPKF, TQNS…APVF, SQDV…APEV, IFQS…APVF, SQSS…APRV, and DGSA…LPDI. The Extracellular segment spans residues 31–689; that stretch reads EQIRYRIPEE…SDLQAELQFY (659 aa). N417 and N543 each carry an N-linked (GlcNAc...) asparagine glycan. The helical transmembrane segment at 690–710 threads the bilayer; that stretch reads LVVALALISVLFLVAMILAIA. Residues 711–923 are Cytoplasmic-facing; sequence LRLRRSSSPA…KKKSGKKEKK (213 aa). 2 disordered regions span residues 797 to 832 and 893 to 923; these read SHQQ…WPNN and ATLT…KEKK. Residues 913-923 show a composition bias toward basic residues; the sequence is NKKKSGKKEKK.

The protein localises to the cell membrane. Its function is as follows. Potential calcium-dependent cell-adhesion protein. May be involved in the establishment and maintenance of specific neuronal connections in the brain. The chain is Protocadherin gamma-B4 (PCDHGB4) from Homo sapiens (Human).